Reading from the N-terminus, the 412-residue chain is MSATTSEENPDSINYIGFNQDSKVICVGHKDGYMFYKTADILENNTLTYEGENLTHLGLNNCLIIERLFSSALMVVISQKDPRVLHVYHFTSRNIICDHRFNKSVLTVRLNRDRIVVCLEDCIYIYNLKDMKMMHNIMDTPTNKLGVLDLTSNPGNALIAYPGSTDTGSVHLFDAINLSSVSTFNAHEGTIACLKFNQEGNMIATASTKGTVIRVYSVPNGHRLFEFRRGVTRCVNIYSLCFSSDSKYLTSSSNTETVHVFKLEKTEGVDNKPEASTEGGGWFDAINKTFSAYMPSQVLQVGELMTTERSFATAKLPGAARSNQVSLVSHKNQQYVMAATSDGFVYAYRLDPEGGELDLIKQHNIGPKSDTSRASPTSTGSGGAAKSAEASNQSVPNMDDPDDFPPMSHTSG.

WD repeat units lie at residues 100–139, 142–183, and 186–226; these read RFNKSVLTVRLNRDRIVVCLEDCIYIYNLKDMKMMHNIMD, TNKL…SVST, and AHEG…RLFE. Positions 227-230 match the L/FRRG motif motif; the sequence is FRRG. The stretch at 232–271 is one WD 4 repeat; the sequence is TRCVNIYSLCFSSDSKYLTSSSNTETVHVFKLEKTEGVDN. The disordered stretch occupies residues 363 to 412; it reads HNIGPKSDTSRASPTSTGSGGAAKSAEASNQSVPNMDDPDDFPPMSHTSG. A compositionally biased stretch (low complexity) spans 372–391; sequence SRASPTSTGSGGAAKSAEAS.

This sequence belongs to the WD repeat PROPPIN family. As to expression, expressed in neurons and intestinal cells.

The protein localises to the cytoplasmic vesicle. It localises to the phagosome membrane. It is found in the cytoplasm. In terms of biological role, component of the autophagy machinery that is recruited to phosphatidylinositols on preautophagosomal structures, which are early autophagic structures, to promote autophagosome formation, and the subsequent degradation and clearance of engulfed apoptotic cells and P-granules in somatic cells. In particular, binds with high affinity to phosphatidylinositols including phosphatidylinositol 3-phosphate (PtdIns(3)P), phosphatidylinositol 4-phosphate (PtdIns(4)P), and phosphatidylinositol 5-phosphate (PtdIns(5)P), and more weakly to phosphatidylinositol 3,5-bisphosphate (PtdIns(3,5)P2). Plays a role in mitophagy, which is the autophagic consumption of mitochondria, in response to dietary restriction. Involved in xenophagy, the autophagy-mediated degradation of pathogens and pathogen products, such as toxins. Also plays a role in membrane-pore repair. In a daf-18/PTEN- and daf-16/FOXO-dependent manner, required for the proliferation of germ stem cell progenitors in the gonad during the late phases of larval development. By regulating the release of neurotransmitters and neuropeptides, involved in the control of lifespan in response to dietary restriction and daf-2 signaling. Probably through its involvement in autophagy, required for dauer formation. The chain is Autophagy-related protein 18 from Caenorhabditis elegans.